The primary structure comprises 469 residues: MTSQLHKKGEAWSARFSEPMSELVKRYTSSVFFDKRLALVDIAGSLAHASMLAAQKIISADDLAAIERGMAQIKGEIERGEFEWQLDLEDVHLNIEARLTALIGDAGKRLHTGRSRNDQVATDIRLWLRGEIDRIGGLLNDLRGALLDLAEQNADTIMPGFTHLQVAQPVTFGHHLLAYVEMFTRDAQRMRDCRTRVNRLPLGAAALAGTSYPIDRHAVAKTLGFDGICANSLDAVSDRDFAIEFTAASALVMTHVSRFSEELVLWMSPRVGFIDIADRFCTGSSIMPQKKNPDVPELARGKTGRVNGHLMALLTLMKGQPLAYNKDNQEDKEPLFDTVDTVADTLRIFAEMVAGITVKPDAMRAAALQGFSTATDLADYLVKRGLPFRDAHEAVAHAVRICDDRGIDLADLTLDEMKQELPNVAHLIGDDVFGYLTLEGSVASRNHPGGTAPDQVRAAIKAARAALGE.

Belongs to the lyase 1 family. Argininosuccinate lyase subfamily.

Its subcellular location is the cytoplasm. It carries out the reaction 2-(N(omega)-L-arginino)succinate = fumarate + L-arginine. It functions in the pathway amino-acid biosynthesis; L-arginine biosynthesis; L-arginine from L-ornithine and carbamoyl phosphate: step 3/3. The protein is Argininosuccinate lyase of Burkholderia vietnamiensis (strain G4 / LMG 22486) (Burkholderia cepacia (strain R1808)).